We begin with the raw amino-acid sequence, 388 residues long: Ras-related protein Rab-26 (388 aa).

The segment at 1 to 115 is disordered; that stretch reads MASTAVGLGG…HHHSQLSLTG (115 aa). The span at 7–21 shows a compositional bias: gly residues; sequence GLGGGEGDPGAGGPP. Basic and acidic residues predominate over residues 47-56; that stretch reads RIEELRRRPF. Residues 67 to 86 show a composition bias toward low complexity; sequence PASVSASITTTTTQQQQQHH. Residues 87 to 109 show a composition bias toward basic residues; sequence NPSHHHQSSHHQPSHHHHHHHHS. 197–204 provides a ligand contact to GTP; that stretch reads GDSGVGKT. An Effector region motif is present at residues 219–228; the sequence is SFSATVGIAL. GTP contacts are provided by residues 246-250 and 304-307; these read DTAGQ and NKAD. Residue C382 is the site of S-palmitoyl cysteine attachment. At C385 the chain carries Cysteine methyl ester. C385 carries S-geranylgeranyl cysteine lipidation. The propeptide at 386-388 is removed in mature form; that stretch reads RNM.

The protein belongs to the small GTPase superfamily. Rab family.

It localises to the cell membrane. Its function is as follows. Participates in exocrine secretion. The sequence is that of Ras-related protein Rab-26 from Drosophila melanogaster (Fruit fly).